The sequence spans 59 residues: Large ribosomal subunit protein bL32 (59 aa).

The interval 1–59 (MAVQQNKKSPSKRGMHRSHDFLTTSPLAVEPSTGEVHLRHHISPNGYYRGKKVVKTKND) is disordered. Positions 49–59 (RGKKVVKTKND) are enriched in basic residues.

Belongs to the bacterial ribosomal protein bL32 family.

This chain is Large ribosomal subunit protein bL32, found in Burkholderia mallei (strain NCTC 10247).